The following is a 647-amino-acid chain: MHLSDLAHPNELHGLSVAELQDVAKQIRERHLEVVSNSGGHLGPGLGVVELTLALYQTLDLDKDRVVWDVGHQAYPHKLITGRYADFDSLRQQGGVAGYLKRCESEFDHFGAGHASTSISAALGMAMARDRQGLDYKCVAVIGDGALTGGMALEAINHAGHMPNTPLLVVLNDNDMSISPPVGALSSHLNRMRLSPPMQFLSGSVEESMRHLPFMGGDLPPELNRLKESMRRLAVPKVGAVFEELGFTYMGPIDGHDMGEMIRTFQAAHRIGGPALVHVITKKGKGYPYAEADQVGYHAQSAFDLGTGKARPSKTPKPPSYSKVFGQTLVKICEQNSKVVGITAAMATGTGLDLLQKALPDQYVDVGIAEQHAVTLAAGMACDGLRPVVAIYSTFLQRAFDQMIHDVGIQNLPVTFVLDRAGIVGADGPTHQGQYDISYLRAIPNFTVMAPKDEAELQRMLVSSLQHSGPCAIRIPRGPGEGVPLMEEGWEPLPIGRGEVLRDGDDLLIVAYGAMNSKALATADLLASCGVQSTVVNARFLRPLDDELLHPLARRIGKVVTIEEGTLAGGFGSALTESLLDADIKPSILRLGIPDVLVDHATPQQSFEKLGLTPAQMAESIQGFLQRSKLTTATSVVQQPSVSVLES.

Thiamine diphosphate-binding positions include His-72 and 113–115 (GHA). Asp-144 contributes to the Mg(2+) binding site. Residues 145-146 (GA), Asn-174, Tyr-287, and Glu-370 contribute to the thiamine diphosphate site. A Mg(2+)-binding site is contributed by Asn-174.

It belongs to the transketolase family. DXPS subfamily. Homodimer. Mg(2+) serves as cofactor. It depends on thiamine diphosphate as a cofactor.

The enzyme catalyses D-glyceraldehyde 3-phosphate + pyruvate + H(+) = 1-deoxy-D-xylulose 5-phosphate + CO2. The protein operates within metabolic intermediate biosynthesis; 1-deoxy-D-xylulose 5-phosphate biosynthesis; 1-deoxy-D-xylulose 5-phosphate from D-glyceraldehyde 3-phosphate and pyruvate: step 1/1. Catalyzes the acyloin condensation reaction between C atoms 2 and 3 of pyruvate and glyceraldehyde 3-phosphate to yield 1-deoxy-D-xylulose-5-phosphate (DXP). This is 1-deoxy-D-xylulose-5-phosphate synthase from Synechococcus sp. (strain WH7803).